Consider the following 284-residue polypeptide: Protein SIC1 (284 aa).

The interval 1–89 (MTPSTPPRSR…SPFPKSSVKR (89 aa)) is disordered. Threonine 5 is subject to Phosphothreonine; by PHO85. 2 stretches are compositionally biased toward polar residues: residues 18 to 52 (PSGNTSSSALMQGQKTPQKPSQNLVPVTPSTTKSF) and 61 to 79 (PNSNMGMTSPFNGLTSPQR). A Phosphothreonine modification is found at threonine 33. Serine 76 is subject to Phosphoserine. Threonine 173 bears the Phosphothreonine mark. Phosphoserine occurs at positions 198 and 201. Lysine derivative occurs at positions 268, 272, and 274.

In terms of assembly, interacts with HOG1. Phosphorylated by cyclin-dependent kinases CDC28 and PHO85 in association with G1-cyclins, promoting degradation of SIC1 and exit form G1. In terms of processing, may contain a covalently attached chromophore. Post-translationally, the N-terminus is blocked.

The protein localises to the cytoplasm. The protein resides in the nucleus. In terms of biological role, substrate and inhibitor of the cyclin-dependent protein kinase CDC28. Its activity could be important for faithful segregation of chromosomes to daughter cells. It acts in response to a signal from a post-start checkpoint. This Saccharomyces cerevisiae (strain ATCC 204508 / S288c) (Baker's yeast) protein is Protein SIC1 (SIC1).